A 301-amino-acid polypeptide reads, in one-letter code: Phosphoribosylaminoimidazole-succinocarboxamide synthase (301 aa).

The protein belongs to the SAICAR synthetase family.

The catalysed reaction is 5-amino-1-(5-phospho-D-ribosyl)imidazole-4-carboxylate + L-aspartate + ATP = (2S)-2-[5-amino-1-(5-phospho-beta-D-ribosyl)imidazole-4-carboxamido]succinate + ADP + phosphate + 2 H(+). The protein operates within purine metabolism; IMP biosynthesis via de novo pathway; 5-amino-1-(5-phospho-D-ribosyl)imidazole-4-carboxamide from 5-amino-1-(5-phospho-D-ribosyl)imidazole-4-carboxylate: step 1/2. In Cyberlindnera jadinii (Torula yeast), this protein is Phosphoribosylaminoimidazole-succinocarboxamide synthase (ADE1).